The chain runs to 129 residues: UPF0148 protein AF_2370 (129 aa).

The disordered stretch occupies residues 61–80 (SAAKAESEEKPPESTKPAVK).

It belongs to the UPF0148 family.

The protein is UPF0148 protein AF_2370 of Archaeoglobus fulgidus (strain ATCC 49558 / DSM 4304 / JCM 9628 / NBRC 100126 / VC-16).